Consider the following 245-residue polypeptide: 8-amino-3,8-dideoxy-manno-octulosonate cytidylyltransferase (245 aa).

The protein belongs to the KdsB family.

Its subcellular location is the cytoplasm. It catalyses the reaction 8-amino-3,8-dideoxy-alpha-D-manno-octulosonate + CTP = CMP-8-amino-3,8-dideoxy-alpha-D-manno-oct-2-ulosonate + diphosphate. Its pathway is bacterial outer membrane biogenesis; lipopolysaccharide biosynthesis. Its function is as follows. Activates KDO8N (a required 8-carbon sugar) for incorporation into bacterial lipopolysaccharide in the Shewanella genus. The sequence is that of 8-amino-3,8-dideoxy-manno-octulosonate cytidylyltransferase from Shewanella piezotolerans (strain WP3 / JCM 13877).